Consider the following 143-residue polypeptide: Ribonuclease HI (143 aa).

The region spanning 1 to 136 is the RNase H type-1 domain; the sequence is MQEIEIFCDG…CNSLAKLEAQ (136 aa). Asp9, Glu47, Asp69, and Asn128 together coordinate Mg(2+).

This sequence belongs to the RNase H family. In terms of assembly, monomer. Mg(2+) serves as cofactor.

The protein localises to the cytoplasm. It carries out the reaction Endonucleolytic cleavage to 5'-phosphomonoester.. In terms of biological role, endonuclease that specifically degrades the RNA of RNA-DNA hybrids. The sequence is that of Ribonuclease HI (rnhA) from Helicobacter pylori (strain J99 / ATCC 700824) (Campylobacter pylori J99).